Here is a 445-residue protein sequence, read N- to C-terminus: Methylphloroacetophenone oxidase (445 aa).

The chain crosses the membrane as a helical span at residues 25 to 45 (VLSIALIGVACAISIRSILYV). Residue asparagine 51 is glycosylated (N-linked (GlcNAc...) asparagine).

This sequence belongs to the cytochrome P450 family.

Its subcellular location is the membrane. It functions in the pathway secondary metabolite biosynthesis. Methylphloroacetophenone oxidase; part of the gene cluster that mediates the biosynthesis of usnic acid, a dibenzofuran lichen product possessing a broad spectrum of biological activities. Two genes, mpas and mpao, comprise the usnic acid biosynthetic gene cluster with a single post-PKS enzyme, the methylphloracetophenone oxidase (mpao). The methylphloroacetophenone synthase (mpas) is a non-reducing polyketide synthase that produces methylphloracetophenone from acetate via a methylated tetraketide intermediate. The methylphloroacetophenone oxidase then carries out the oxidative dimerization of methylphloracetophenone to usnic acid. The protein is Methylphloroacetophenone oxidase of Cladonia uncialis (Cup lichen).